The chain runs to 98 residues: DNA-binding protein Fis (98 aa).

The segment at residues 74–93 (QTRAALMLGINRSTLRKKLK) is a DNA-binding region (H-T-H motif).

It belongs to the transcriptional regulatory Fis family. Homodimer.

Its function is as follows. Activates ribosomal RNA transcription. Plays a direct role in upstream activation of rRNA promoters. This Buchnera aphidicola subsp. Acyrthosiphon pisum (strain 5A) protein is DNA-binding protein Fis.